We begin with the raw amino-acid sequence, 317 residues long: Transaldolase (317 aa).

Lys132 acts as the Schiff-base intermediate with substrate in catalysis.

The protein belongs to the transaldolase family. Type 1 subfamily.

It is found in the cytoplasm. The enzyme catalyses D-sedoheptulose 7-phosphate + D-glyceraldehyde 3-phosphate = D-erythrose 4-phosphate + beta-D-fructose 6-phosphate. It functions in the pathway carbohydrate degradation; pentose phosphate pathway; D-glyceraldehyde 3-phosphate and beta-D-fructose 6-phosphate from D-ribose 5-phosphate and D-xylulose 5-phosphate (non-oxidative stage): step 2/3. Functionally, transaldolase is important for the balance of metabolites in the pentose-phosphate pathway. The polypeptide is Transaldolase (Haemophilus influenzae (strain ATCC 51907 / DSM 11121 / KW20 / Rd)).